The chain runs to 421 residues: MKVTILGAGVIGVTSAYYLAKAGHEVTVIDRQTGPALETSFANAGEVSFGYCSPWAAPGIPQKALKWLFMEHAPLILRPKIDAAMLGWMLRMLSNCTSGRYAINKSRMLRLADYSRIALAQLRTETNIDYDQRMQGTLQLFRTQAQLDASAKDVKALAADGIPYEVLDREACIRVEPALAAARHKIVGGLLTPKDETGDCFKFTNQLAEKAASLGVVFDYGRSIERLVVSGGKVTGVVTDRGTETADAYVVALGSYSPLLLKPLGITLPVYPVKGYSLTIPIVDPSKSPESTVMDETYKIAITRLGDRIRVGGMAEISGYTNDLGAARRRTLEHSVTDLFPGGDMGRADFWSGLRPMTPDGTPVIGATGISNLYINSGHGTLGWTMSCGSGRLLSDIVSGRQTEIDNADLALSRYAAGRVG.

Residue 3–17 (VTILGAGVIGVTSAY) participates in FAD binding.

It belongs to the DadA oxidoreductase family. FAD serves as cofactor.

The enzyme catalyses a D-alpha-amino acid + A + H2O = a 2-oxocarboxylate + AH2 + NH4(+). Its pathway is amino-acid degradation; D-alanine degradation; NH(3) and pyruvate from D-alanine: step 1/1. Functionally, oxidative deamination of D-amino acids. The protein is D-amino acid dehydrogenase of Allorhizobium ampelinum (strain ATCC BAA-846 / DSM 112012 / S4) (Agrobacterium vitis (strain S4)).